The chain runs to 50 residues: Small integral membrane protein 46 (50 aa).

Residues 15-37 (TTFQLWLQLLLWAHLAVRFLGYL) traverse the membrane as a helical segment.

The protein localises to the membrane. This chain is Small integral membrane protein 46, found in Homo sapiens (Human).